We begin with the raw amino-acid sequence, 240 residues long: Phosphatidylserine decarboxylase proenzyme (240 aa).

The Schiff-base intermediate with substrate; via pyruvic acid role is filled by Ser-205. Pyruvic acid (Ser); by autocatalysis is present on Ser-205.

Belongs to the phosphatidylserine decarboxylase family. PSD-A subfamily. In terms of assembly, heterodimer of a large membrane-associated beta subunit and a small pyruvoyl-containing alpha subunit. Requires pyruvate as cofactor. Post-translationally, is synthesized initially as an inactive proenzyme. Formation of the active enzyme involves a self-maturation process in which the active site pyruvoyl group is generated from an internal serine residue via an autocatalytic post-translational modification. Two non-identical subunits are generated from the proenzyme in this reaction, and the pyruvate is formed at the N-terminus of the alpha chain, which is derived from the carboxyl end of the proenzyme. The post-translation cleavage follows an unusual pathway, termed non-hydrolytic serinolysis, in which the side chain hydroxyl group of the serine supplies its oxygen atom to form the C-terminus of the beta chain, while the remainder of the serine residue undergoes an oxidative deamination to produce ammonia and the pyruvoyl prosthetic group on the alpha chain.

The protein resides in the cell membrane. It catalyses the reaction a 1,2-diacyl-sn-glycero-3-phospho-L-serine + H(+) = a 1,2-diacyl-sn-glycero-3-phosphoethanolamine + CO2. Its pathway is phospholipid metabolism; phosphatidylethanolamine biosynthesis; phosphatidylethanolamine from CDP-diacylglycerol: step 2/2. Functionally, catalyzes the formation of phosphatidylethanolamine (PtdEtn) from phosphatidylserine (PtdSer). This Rhodopirellula baltica (strain DSM 10527 / NCIMB 13988 / SH1) protein is Phosphatidylserine decarboxylase proenzyme.